A 416-amino-acid polypeptide reads, in one-letter code: Putative pseudouridine transporter (416 aa).

The Periplasmic segment spans residues 1–2 (MD). A helical transmembrane segment spans residues 3–23 (IMRSVVGMVVLLAIAFLLSVN). Topologically, residues 24–31 (KKSISLRT) are cytoplasmic. The helical transmembrane segment at 32–52 (VGAALLLQIAIGGIMLYFPPG) threads the bilayer. Residues 53–104 (KWAVEQAALGVHKVMSYSDAGSAFIFGSLVGPKMDVLFDGAGFIFAFRVLPA) lie on the Periplasmic side of the membrane. The helical transmembrane segment at 105–125 (IIFVTALISLLYYIGVMGLLI) threads the bilayer. Topologically, residues 126 to 172 (RILGSIFQKALNISKIESFVAVTTIFLGQNEIPAIVKPFIDRMNRNE) are cytoplasmic. Residues 173–193 (LFTAICSGMASIAGSMMIGYA) traverse the membrane as a helical segment. Topologically, residues 194–196 (GMG) are periplasmic. The helical transmembrane segment at 197-217 (VPIDYLLAASLMAIPGGILFA) threads the bilayer. Residues 218–268 (RILSPATEPSQVTFENLSFSETPPKSFIEAAASGAMTGLKIAAGVATVVMA) lie on the Cytoplasmic side of the membrane. The chain crosses the membrane as a helical span at residues 269-289 (FVAIIALINGIIGGIGGWFGF). The Periplasmic segment spans residues 290–352 (ANASLESIFG…QTGGTLEVKT (63 aa)). A helical transmembrane segment spans residues 353–373 (IAIISFALCGFANFGSIGVVV). Over 374–394 (GAFSAISPKRAPEIAQLGLRA) the chain is Cytoplasmic. The helical transmembrane segment at 395–415 (LAAATLSNLMSATIAGFFIGL) threads the bilayer. Residue alanine 416 is a topological domain, periplasmic.

It belongs to the concentrative nucleoside transporter (CNT) (TC 2.A.41) family.

It is found in the cell inner membrane. Functionally, could be involved in pseudouridine transport. This is Putative pseudouridine transporter (psuT) from Escherichia coli (strain K12).